The following is an 851-amino-acid chain: B-box type zinc finger protein ncl-1 (851 aa).

The disordered stretch occupies residues 71–91; that stretch reads GFGFGSPSSTTSSSPPLSNSP. Over residues 76–91 the composition is skewed to low complexity; sequence SPSSTTSSSPPLSNSP. A B box-type 1; atypical zinc finger spans residues 127–174; that stretch reads VPAVHCSGCKSNETATSFCQDCNANLCDNCTMAHKFMHCFADHRVVSL. Zn(2+) contacts are provided by cysteine 132, cysteine 135, cysteine 156, and histidine 160. A compositionally biased stretch (low complexity) spans 176–197; that stretch reads TPGTGSSSSSTSSSSSASSTSS. The segment at 176-211 is disordered; sequence TPGTGSSSSSTSSSSSASSTSSHQVPSLGGKQSPDS. The B box-type 2 zinc-finger motif lies at 218-261; that stretch reads KRSVLCLQHRASELVFFCVSCNLAICRDCTVSDHPSGTHQYELI. Zn(2+)-binding residues include cysteine 223, histidine 226, cysteine 246, and histidine 251. Residues 303–331 are a coiled coil; it reads SLHNAHAQLEETVSNLINVIQDQKKTLAK. NHL repeat units lie at residues 573 to 616, 620 to 665, 666 to 707, 708 to 750, and 751 to 794; these read HCKF…FDKE, KFQF…YNQY, GQFL…FDMF, GNIL…FSYE, and GQYL…FSQD.

Present in cells in which nucleoli are absent, and absent from large cells in which nucleoli are prominent. Highly expressed in the gonads.

It is found in the cytoplasm. Its function is as follows. Translational repressor that inhibits protein synthesis. Represses the translation of mRNAs such as fib-1, probably by being recruited by RNA-binding protein nos-2 and the Pumilio proteins puf-5, puf-8 and puf-9 to the consensus core PUF binding motif in the 3'-UTR of fib-1 mRNA. Negatively regulates ribosomal RNA (rRNA) synthesis, ribosomal protein synthesis and nucleolus size. Its role in the negative regulation of nucleolus size is most likely through its negative regulation of the translation of proteins such as the rRNA 2'-O-methyltransferase fib-1, and dao-5. Might act directly as a transcription factor to inhibit RNA polymerase I (rRNA) and III (5S RNA) transcription. Plays a role in embryonic development, and in particular, is involved in regulating the localization of proteins, such as par-2, that are required for embryonic cell polarity. Plays a role in the regulation of lifespan, and the response to nutrient availability. The chain is B-box type zinc finger protein ncl-1 from Caenorhabditis elegans.